The sequence spans 256 residues: Thiazole synthase (256 aa).

K95 functions as the Schiff-base intermediate with DXP in the catalytic mechanism. Residues G156, 182–183 (AG), and 204–205 (NT) each bind 1-deoxy-D-xylulose 5-phosphate.

This sequence belongs to the ThiG family. As to quaternary structure, homotetramer. Forms heterodimers with either ThiH or ThiS.

The protein localises to the cytoplasm. It catalyses the reaction [ThiS sulfur-carrier protein]-C-terminal-Gly-aminoethanethioate + 2-iminoacetate + 1-deoxy-D-xylulose 5-phosphate = [ThiS sulfur-carrier protein]-C-terminal Gly-Gly + 2-[(2R,5Z)-2-carboxy-4-methylthiazol-5(2H)-ylidene]ethyl phosphate + 2 H2O + H(+). It participates in cofactor biosynthesis; thiamine diphosphate biosynthesis. Its function is as follows. Catalyzes the rearrangement of 1-deoxy-D-xylulose 5-phosphate (DXP) to produce the thiazole phosphate moiety of thiamine. Sulfur is provided by the thiocarboxylate moiety of the carrier protein ThiS. In vitro, sulfur can be provided by H(2)S. This chain is Thiazole synthase, found in Escherichia coli O81 (strain ED1a).